A 602-amino-acid polypeptide reads, in one-letter code: UvrABC system protein C (602 aa).

The 79-residue stretch at 19 to 97 (EEPGVYRMIG…IKSLAPRYNI (79 aa)) folds into the GIY-YIG domain. Residues 206-241 (SEVIDDLTARMHAAAERLAFEEAAACRDQVRVLQAV) form the UVR domain.

This sequence belongs to the UvrC family. In terms of assembly, interacts with UvrB in an incision complex.

The protein resides in the cytoplasm. Its function is as follows. The UvrABC repair system catalyzes the recognition and processing of DNA lesions. UvrC both incises the 5' and 3' sides of the lesion. The N-terminal half is responsible for the 3' incision and the C-terminal half is responsible for the 5' incision. This chain is UvrABC system protein C, found in Aromatoleum aromaticum (strain DSM 19018 / LMG 30748 / EbN1) (Azoarcus sp. (strain EbN1)).